A 130-amino-acid polypeptide reads, in one-letter code: Small ribosomal subunit protein uS8 (130 aa).

This sequence belongs to the universal ribosomal protein uS8 family. As to quaternary structure, part of the 30S ribosomal subunit.

In terms of biological role, one of the primary rRNA binding proteins, it binds directly to 16S rRNA central domain where it helps coordinate assembly of the platform of the 30S subunit. The sequence is that of Small ribosomal subunit protein uS8 from Natronomonas pharaonis (strain ATCC 35678 / DSM 2160 / CIP 103997 / JCM 8858 / NBRC 14720 / NCIMB 2260 / Gabara) (Halobacterium pharaonis).